We begin with the raw amino-acid sequence, 4034 residues long: MRDEMWNTATEPIAIIGSGCKFPGGSTTPSKLWELLKDPKDIVSEIRPDRFDVDKYFHPDHKHHGTSNVRHSYFLEENFKHFDAKFFGIRPQEAMAMDPQQRFLLETVYESLEAAGITISDLKGSQAGVFVGNMGVDYSELLSQDIDAFPTYFAPGTARSILSNRISYFFDLHGPSVTVDTACSSSLVAVHQAVQSLRLGETPVAIVCGANLLLGPAQYIAESKLQMLSPNGRSRMWDASADGYARGEGFASIVLKPLSVALANGDHIECIIRETGCNQDGRTKGITMPSPLAQCKLIQETYKRAGLDLSKSSDRPQYFEAHGTGTPAGDPVEAEAISTAFFGPESGFRRTSHDPKLYVGSVKTVIGHTEGTAGLAGLIKASLAMKAKSIPPNLHLERVNPAVQPFYGNLEIPTRLMDWPEPAPGQPLRASVNSFGFGGANAHVILESYTPAAEVAMVTPTAAAGPVFSPFVFSASSDKALASMLSAYSDYLSLNPTVDLRSVAYTLSQHRSVFDKRAAISAPDLDTLKTKLKARSEEASPSGKTAAVQSLERRPRYLGVFTGQGAQWARMGVDVINASPAARAIFEDLEQSLKTLPEEDRPSWSMLEELLAPPETSRVYQANISQTVCTAVQVMMVQLLRAAGIEFSCVVGHSSGEMAAAYTAGYLSARDAVRAAYFRGVHSQLAKGSNGQPGGMIAVGTNFEDAEELCELDDFKGRLCVAASNSAELVTLSGDLDAVQEVKKILDAEEKFNKQLQVDKGYHSHHMLPCSEPYVASLQKCGIQAQVPGDATACRWISSVYVDDMTNLDCRVQDRYWIENLAKPVMFSQALSHALGGDDKFDSVIEVGPHPALKGPASQTIQACLGERLPYFGCLSRGTDSNEAFAEFLGGVWSTFGSSAVDLAAYERFATGGCDQRLVKGLPSYTWDHDVEHYFQSRLSKVVLHRSTPPNELLGTRLPDDTAGEVRWRNSLHPGELPWLLQHSAQGQTVFPGTGYIATTLEAVKQLFDSSGVQTVEIRDMVIGNALVIEANTGVETLFSLTFINTQTDRITAHFSFCSQQGGSTKLVENASGDLVVLLGEPSEDALPRSFHPGTQMKDIDEERFYEAIDKLGYGYEGPFRALSQLQRRMGAATGLVAIPEKTKHFDQMVLHPAALDAMVQTVLLAYCYPGDTRLQGISLPTGIDCIRFNYGMLSEAARPGCQLPFLSCTAFEGDDVLGGVGGDVGGDVDVFSEDKRFALIQLQGLHTKPLSPPSAATDLQIFSEMEWKTASPEGADMEVRGEKRAYVADLYSSMERVAYFYMRHVDREIGKDRSGLAPHQVRFLEWVDHMCGRVEAGTLPHISRKWDHDTRQDILKIIAKYPDSIDLELMHAVGENLCSVFRGEMNALEPMVKKNMLNRFYSDALGMSPYTEDLARMVGHITHRYPHMNILEVGAGTGGATKVMLRRLQDAFASYTYTDISSGFFADARQVFKAHESKMLFKTLDIEKDIVDQGYEENSFDLVIANLVVHATADLDATMGRLRRLVKPGGHLVLLEITTNDPLRFGFIFGPLPGWWLGGEDGRVHSPCVDVEWWDRVMKRNGFSGADIVTPHHTLGPLSVIMTQAVDHRVQLLRQPTSADFGDFTIDPERLTIVGGVKPLAEGLEQLLKPRYQSVAWIPTLEEVSSHSLPVMGSVLSLVELDEPLFKDMTAQTLEGFKFVFQQSRSVYWITCGASGANPYSNMAAGVARTVALEMRHLRLGFLDFEDAKDATVQRLADRFLEFEILGTLEQQGKLDHLTWYQEPELRFDGKNLLVPRMKLSKDRNGRYNSRRRQLTKNVNPREVPVSLVPTTSGKDFVLKESLSSSSTKHGAQDTVSLRVHYASQRSLRLESSDYLFLVLGTNLSSGEAMFALADSNRSIVHVDRQWTTSYLGNLDHGRHALADLYTQIMASTVVAGLSAGDSLVVLDAETPLSQALSARCAAKGVRLTLLSTTTATSHSEADGTNKTNVRIHPLESRRSIESKLPSNATCFLDLSTNNGSEAAAVINSYIPAQCRVETRDTLTATACQVTRSTSTGGLGPAVGDVLPACWANVEAAGRDLSFFSAAVVTPTELTAAAGNGKTSAPRVGDDALLLITDWTAEAEVGVLVQPADSMVRFRQDKTYWLVGLTGGLALSLCRWMVNRGARYVVMTSRNPKIDKEWLQGVESCGATVKIFSNDVTDRAAVNSAYRTISATLPPIAGVVQGAMVLRDTMFAETTMETIESILGPKVRGSIYLDEIFYSTPLDFFVFLSSVTATSGNPGQSIYAGANMFMNSLAAQRRKRGVAGSSVEIGCIMGNGSVTTILSYEHQKYLFSVGNTWLAEQDFLTMFGEAVLASPPDAPDSVTSVTGLRLQFNDDKPDITWFSNPIFQHLVLQSGNAMQTSLSVARQGTPVKSLLQEAKSSEEVLDILKDAFTAKLVSSLQADPDSNLLEVDLETLGMDSLVAVDLRSWFLAELSVDVPVLKILNGSTARLLLEFVQGLIPASMTPKLDGSDGADAAAQEAPPVAPPVTKPKPDVSVKVPPPHQPVASLKPSGPASPTSPSSATASPGRSRSVASPVTADTPVSPTTSASMASLNDSRKLIRTVPVSFGQSRFWFLGSYNPDPLAFNITSLMRISGPLRTNDFGKAVDKVLNHHEALRTSFVSENDAPVQKIWSSPAFALEQRKIADDESEVVKAYTEVQNTRYNLEAGQTMRIMLLTKSPTKHVLVLGYHHINMDGVSFEVLFSDIEKAYNRTPLDRSVMQFPDFTIREAGEYKSGAWRSELQYWQSKFTSLPEPTPLLSVSKRRTRPVNLSYTTHSVSRRINAEQSQAIHTVGRKFKATPFHFYLSVFKTLIARFSGADDFCIGIADANRKEDKVMGAVGLYLNLLPLRVRSALGQTFGETLADMKKVSQEAFANSKVPFDVLLNELSVPRSSSQTPLFQTFVNYRRGVSEERSFCGCTGAGELISGGQIGYDISLDIVENPGGDALVTLSVQKDLYNVDMANLLLDSYFRLVDSFAKNPATSLNRPAIYDPVAVDKALTLGCGPTLEDSSWPETLIHRIENMSVKYATKFALRNGQNGGLTYSQMIARINDIAAKLIDAKVGTGIVGVMQASTMDFICSILAVWKAGAIYTPLDPRLNSTDRLKAVVDECQPACILVDATTKPLFDSLATNAVQIDVSMVQSSKTLEASPKVAIHAKAPSAAAVFYTSGSTGVPKGITLSHASLTYNIMAATRQFGFKEGVDIMLQQSSFSFDMALAQMLTSLSNGGTLVVVPSHLRGDALGLSQLIVAENVSIVQASPTEYKSLIGVNAQHLKTSKWRVALSGGENMTQSLLEVFRSLGKPDLVLFNGYGPTEATINANTRIVPYHEPNSNPDLPLLTWPNYSISIVDLELNPVPVGVFGEVCIGGAGVGLGYFKNDELTAKAFVADKTAPAEFVAKGWKTKFRTGDLGRLSPDGGLIIEGRIDGDTQVKLRGMRIDLKNIESAILQAGAGKIIDAAVSVRRGGADESEPQYLVGHVVLDADQTPEDSQQDFLAQLIPRLRLPRHMKPSLLVPIRALPQTASHKLDRRALQQLPISDAGQIAKQSQQGAELGSDQARMWKLWKQVIPRDVVSQYSITPQSDFFHVGGTSLLLVNLQSLIAREHGRAPPLHAMFESSTVAAMTDLVLSDDASGSTALIDWEQETSIPTLPPHIIPGGAGNKVSVPPRVVLLTGATGFLGRQLMAFLLRQPSVKRIHCLAVRGGAPPSSAAPFSDPRVSIHAGDLNAPHLGLGEAVAELLFAQADVIIHNGADVSFLKTYATLRATNVGSTRELARLAAPRRIPFHFVSSASITQLTGLDEFGEASMAAWAPPADPRGMSGGYAAAKWASEVLLEKAARAWGLPVVIHRPSSITGEGTNSLDLMGNMFKYIEQLEAVPESDSWKGNFDFVSVENVAADIVQAVVAANVVAAGGVKFIYEAGDIVYPLSMVKDMSEGGAKLPVKTMPLAKWVEKAAEKGLDSMLAEYLIKAASTGTSLAFPRLLKDGN.

Positions 10-448 (TEPIAIIGSG…GANAHVILES (439 aa)) constitute a Ketosynthase family 3 (KS3) domain. Residues C183, H322, and H368 each act as for beta-ketoacyl synthase activity in the active site. Residues 560–879 (VFTGQGAQWA…PYFGCLSRGT (320 aa)) are acyl transferase. Residues 951–1082 (NELLGTRLPD…GDLVVLLGEP (132 aa)) are N-terminal hotdog fold. Residues 951–1257 (NELLGTRLPD…TKPLSPPSAA (307 aa)) form the PKS/mFAS DH domain. Residues 952 to 1252 (ELLGTRLPDD…LQGLHTKPLS (301 aa)) are dehydratase (DH) domain. The Proton acceptor; for dehydratase activity role is filled by H983. Positions 1097 to 1257 (MKDIDEERFY…TKPLSPPSAA (161 aa)) are C-terminal hotdog fold. Residue D1157 is the Proton donor; for dehydratase activity of the active site. Residues 1396–1594 (NMLNRFYSDA…SGADIVTPHH (199 aa)) are methyltransferase (MT) domain. A ketoreductase (KR)domain region spans residues 2144–2317 (TYWLVGLTGG…AGSSVEIGCI (174 aa)). The Carrier 1 domain maps to 2424–2505 (KSSEEVLDIL…LLLEFVQGLI (82 aa)). At S2465 the chain carries O-(pantetheine 4'-phosphoryl)serine. The interval 2512 to 2598 (KLDGSDGADA…SPTTSASMAS (87 aa)) is disordered. The segment covering 2556–2577 (PSGPASPTSPSSATASPGRSRS) has biased composition (low complexity). The segment covering 2586-2598 (TPVSPTTSASMAS) has biased composition (polar residues). Residues 2608–3037 (TVPVSFGQSR…ATSLNRPAIY (430 aa)) form a condensation region. The interval 3073 to 3473 (KYATKFALRN…GGLIIEGRID (401 aa)) is adenylation. The 81-residue stretch at 3598–3678 (AELGSDQARM…AMTDLVLSDD (81 aa)) folds into the Carrier 2 domain. Position 3638 is an O-(pantetheine 4'-phosphoryl)serine (S3638). The segment at 3719 to 3944 (LTGATGFLGR…DFVSVENVAA (226 aa)) is reductase-like.

It belongs to the NRP synthetase family.

The protein localises to the cytoplasm. The protein operates within secondary metabolite biosynthesis. Functionally, hybrid PKS-NRPS synthetase; part of the gene cluster that mediates the biosynthesis of a tyrosine-derived cytochalasan acting as a fungal signal recognized by resistant rice plants and leads to avirulence in Pi33 resistant rice cultivars. The first step in the pathway is catalyzed by the hybrid PKS-NRPS ACE1, assisted by the enoyl reductase RAP1, that are responsible for fusion of the tyrosine precursor and the polyketide backbone. The polyketide synthase module (PKS) of ACE1 is responsible for the synthesis of the polyketide backbone and the downstream nonribosomal peptide synthetase (NRPS) amidates the carboxyl end of the polyketide with the tyrosine precursor. Because ACE1 lacks a designated enoylreductase (ER) domain, the required activity is provided the enoyl reductase RAP1. Reduction by the hydrolyase ORFZ, followed by dehydration and intra-molecular Diels-Alder cyclization by the Diels-Alderase ORF3 then yield the required isoindolone-fused macrocycle. A number of oxidative steps catalyzed by the tailoring enzymes identified within the cluster, including cytochrome P450 monooxygenases CYP1 to CYP4, the FAD-linked oxidoreductase OXR2 and the short-chain dehydrogenase/reductase OXR1, are further required to afford the final cytochalasans that confer avirulence and which have still to be identified. The monooxygenase CYP1 has been shown to be a site-selective C-18 hydroxylase whereas the function of CYP3 is the site-selective epoxidation of the C-6/C-7 olefin that is present in some intermediate compounds. Finally, SYN2 and RAP2 are not required for avirulence in Pi33 resistant rice cultivars. The sequence is that of Polyketide synthase-nonribosomal peptide synthetase ACE1 from Pyricularia oryzae (strain 70-15 / ATCC MYA-4617 / FGSC 8958) (Rice blast fungus).